We begin with the raw amino-acid sequence, 308 residues long: Homoserine kinase (308 aa).

Position 94-104 (94-104 (PLARGLGSSAT)) interacts with ATP.

Belongs to the GHMP kinase family. Homoserine kinase subfamily.

It is found in the cytoplasm. It carries out the reaction L-homoserine + ATP = O-phospho-L-homoserine + ADP + H(+). It functions in the pathway amino-acid biosynthesis; L-threonine biosynthesis; L-threonine from L-aspartate: step 4/5. In terms of biological role, catalyzes the ATP-dependent phosphorylation of L-homoserine to L-homoserine phosphate. This Crocosphaera subtropica (strain ATCC 51142 / BH68) (Cyanothece sp. (strain ATCC 51142)) protein is Homoserine kinase.